The chain runs to 172 residues: Photosystem I assembly protein Ycf3 (172 aa).

3 TPR repeats span residues 35-70 (AFTYYRDGAIMLAQSEGNYAEALQNYYEATRLEIDP), 74-107 (SYILYNIGLIHTSNGEHTKALEYYFRALERNPFL), and 122-155 (GEQAILQGDSEIAEAWFDQAAEYWKQAIALTPGN).

It belongs to the Ycf3 family.

The protein localises to the plastid. The protein resides in the chloroplast thylakoid membrane. Its function is as follows. Essential for the assembly of the photosystem I (PSI) complex. May act as a chaperone-like factor to guide the assembly of the PSI subunits. In Sorghum bicolor (Sorghum), this protein is Photosystem I assembly protein Ycf3.